The chain runs to 480 residues: Dimethyl-sulfide monooxygenase (480 aa).

FMN is bound by residues D58, T104, H154, Y158, and S230. Positions 423–480 (QDSYKPGSLRRKLIGTNDGRVESTHPAAQYRDAYVGKESVADRTQPSPFANAKAPVAE) are disordered.

Belongs to the NtaA/SnaA/DszA monooxygenase family. As to quaternary structure, heterodimer of 2 subunits, DmoA and DmoB. The cofactor is FMN.

It carries out the reaction dimethyl sulfide + NADH + O2 + H(+) = methanethiol + formaldehyde + NAD(+) + H2O. Inhibited by umbelliferone, 8-anilinonaphthalenesulfonate, a range of metal-chelating agents, and Hg(2+), Cd(2+) and Pb(2+) ions. Functionally, monooxygenase that mediates oxidation of dimethyl sulfide, the first step in dimethyl sulfide degradation pathway. Has much lower activity with diethyl sulfide and other short-chain alkyl methyl sulfides. This Hyphomicrobium sulfonivorans protein is Dimethyl-sulfide monooxygenase (dmoA).